We begin with the raw amino-acid sequence, 267 residues long: tRNA pseudouridine synthase A (267 aa).

The active-site Nucleophile is the Asp-51. Tyr-109 provides a ligand contact to substrate.

The protein belongs to the tRNA pseudouridine synthase TruA family. In terms of assembly, homodimer.

It carries out the reaction uridine(38/39/40) in tRNA = pseudouridine(38/39/40) in tRNA. Formation of pseudouridine at positions 38, 39 and 40 in the anticodon stem and loop of transfer RNAs. The sequence is that of tRNA pseudouridine synthase A from Staphylococcus saprophyticus subsp. saprophyticus (strain ATCC 15305 / DSM 20229 / NCIMB 8711 / NCTC 7292 / S-41).